We begin with the raw amino-acid sequence, 41 residues long: SPbeta prophage-derived uncharacterized protein YosF (41 aa).

The chain is SPbeta prophage-derived uncharacterized protein YosF (yosF) from Bacillus subtilis (strain 168).